The primary structure comprises 456 residues: DnaJ homolog dnj-10 (456 aa).

The J domain maps to 44-108 (DYYKTLGVDK…TKRQEYDAYG (65 aa)). The CR-type zinc-finger motif lies at 178–257 (GATKNVSVNV…CEGEGQTVQR (80 aa)). CXXCXGXG motif repeat units lie at residues 208-215 (CPYCNGTG), 231-238 (CNRCRGSG), and 245-252 (CQECEGEG). A compositionally biased stretch (basic and acidic residues) spans 395-429 (KGLEKNQKTEEKETKKNEEKKSEGASESQKRRSEP). The segment at 395–443 (KGLEKNQKTEEKETKKNEEKKSEGASESQKRRSEPVAENAETIDENQEN) is disordered.

In Caenorhabditis elegans, this protein is DnaJ homolog dnj-10 (dnj-10).